The following is a 394-amino-acid chain: Phosphopentomutase (394 aa).

Mn(2+) is bound by residues Asp13, Asp286, His291, Asp327, His328, and His339.

The protein belongs to the phosphopentomutase family. Mn(2+) is required as a cofactor.

The protein localises to the cytoplasm. It catalyses the reaction 2-deoxy-alpha-D-ribose 1-phosphate = 2-deoxy-D-ribose 5-phosphate. It carries out the reaction alpha-D-ribose 1-phosphate = D-ribose 5-phosphate. Its pathway is carbohydrate degradation; 2-deoxy-D-ribose 1-phosphate degradation; D-glyceraldehyde 3-phosphate and acetaldehyde from 2-deoxy-alpha-D-ribose 1-phosphate: step 1/2. Isomerase that catalyzes the conversion of deoxy-ribose 1-phosphate (dRib-1-P) and ribose 1-phosphate (Rib-1-P) to deoxy-ribose 5-phosphate (dRib-5-P) and ribose 5-phosphate (Rib-5-P), respectively. The chain is Phosphopentomutase from Bacillus mycoides (strain KBAB4) (Bacillus weihenstephanensis).